A 149-amino-acid chain; its full sequence is Ribonuclease H (149 aa).

Residues 1–142 form the RNase H type-1 domain; sequence MSDSVELFTD…ADQLANRGVD (142 aa). Asp-10, Glu-48, Asp-70, and Asp-134 together coordinate Mg(2+).

This sequence belongs to the RNase H family. As to quaternary structure, monomer. Mg(2+) is required as a cofactor.

It is found in the cytoplasm. The catalysed reaction is Endonucleolytic cleavage to 5'-phosphomonoester.. Its function is as follows. Endonuclease that specifically degrades the RNA of RNA-DNA hybrids. This is Ribonuclease H from Pseudomonas savastanoi pv. phaseolicola (strain 1448A / Race 6) (Pseudomonas syringae pv. phaseolicola (strain 1448A / Race 6)).